The chain runs to 248 residues: Probable transcriptional regulatory protein FTF0655 (248 aa).

Belongs to the TACO1 family.

It localises to the cytoplasm. The chain is Probable transcriptional regulatory protein FTF0655 from Francisella tularensis subsp. tularensis (strain FSC 198).